The sequence spans 180 residues: Protein YOP1 (180 aa).

An N-acetylserine modification is found at Ser-2. The segment at 2-17 is interaction with YIP1; the sequence is SEYASSIHSQMKQFDT. The Cytoplasmic segment spans residues 2–35; it reads SEYASSIHSQMKQFDTKYSGNRILQQLENKTNLP. Residues 36–55 traverse the membrane as a helical segment; the sequence is KSYLVAGLGFAYLLLIFINV. Topologically, residues 56–57 are lumenal; the sequence is GG. The chain crosses the membrane as a helical span at residues 58–78; that stretch reads VGEILSNFAGFVLPAYLSLVA. Over 79–88 the chain is Cytoplasmic; that stretch reads LKTPTSTDDT. A helical membrane pass occupies residues 89-105; it reads QLLTYWIVFSFLSVIEF. Residues 106-108 are Lumenal-facing; the sequence is WSK. The chain crosses the membrane as a helical span at residues 109 to 127; that stretch reads AILYLIPFYWFLKTVFLIY. Topologically, residues 128–180 are cytoplasmic; that stretch reads IALPQTGGARMIYQKIVAPLTDRYILRDVSKTEKDEIRASVNEASKATGASVH.

Belongs to the DP1 family. In terms of assembly, oligomer. Interacts with YIP1.

It localises to the endoplasmic reticulum membrane. Its subcellular location is the golgi apparatus membrane. Functionally, required to generate and maintain the structure of the tubular endoplasmic reticulum network and the vacuole. Induces high curvature in membranes and causes membrane tubule formation. Involved in membrane/vesicle trafficking. This Saccharomyces cerevisiae (strain ATCC 204508 / S288c) (Baker's yeast) protein is Protein YOP1 (YOP1).